A 2145-amino-acid polypeptide reads, in one-letter code: MPRNDASSRFSSMTGSSTDSARSNITVKPLPSLPPSASSSSPFAASSNQTSNASRSASHGSRRAAPSRLKTDENGQLSRSFKDSDAQVSPTSTSPCVSPSSITSSNSIREHRMSDLADYRRDLAILDPAGGRASRTQQNNPSSGSLSQIAPWMAAAPTPASSGPLPTSFFNDSTDNLSLSSQTSPGLRNATARPSQTTTGSTESPETLYFTDERRPSIASITTTASSQGSRASGARGGIRKLQGFFGEEFPGRDSSEISLSHPIVGKEHRSHSYSHARPHRDRNYSNATDHGRDASPASRPRTPVPKPEVVPFLYQEADDIARYGEAPVRDILSGPDRERFVNDSSQQNNPPKTSGSGRSGHSIGVHLTGHHHRHNKSNEDPRSLRPTVSREDSTISVPKDRNGSSTMYGTRSRAQSPAPSTTGSYWGHKSGSTDGQTSPGQPKKSFLGRLGRRLKEKDDAPDLKKLGPASQSSLHSRPSRQELSKADGQFARGADGKYQPDVRDGIRPDLARPANGPQTFNKFSLSKKAPRSKTQDDLDEAIGPTDRQDVGTVFHLDTNLNNMDGILSKPAPLTPMNAHEIFDEVGSGKGSISYPSSNGAWNAPDSWAVLRDDDAGAQLPDTEDIGSPPRPEEKQHNYCIRVFRADGTFATLQMPLLTSVSELINQIVKKSYLQDPDKFKLVLKKHDLYKVLQSTDRPLLLQKRLLEQVGFEERDRIEDIGREDNSYLCRFLFYPFTDNSYEVMDQMEFLRSQKNNHIDLSGRSLSAIPVQLYPRANEIISLNLSRNLSLQVPRDFISVCPNLRDIKFNNNEARALPKSFGYASRLTMLDASNNRLESLESAALHNLTGLLKLNLANNKLKQLPREFEAFAVLRTLNISSNLLNNFPPFLAKLENLVDLDLSFNTIQSLPDNVGQMTSLERLVITNNELSGSLPPSFKNLRSLRELDIKYNAISNIDVISQLPKLEILSATRNNISQFSGTFERVRSIKLNWNPITKFEIKAPVPTLKALNLSNAQLASIDESFHNMSNLERLELDKNYFVSLPAHIGNLRRLEYFSIAHNSVGELPPEIGCLTELKRLDVRGNNIRKLPMELWWANKLDYLNASSNVLENFPKPASRAPHPPGETNGNTSFPTGRIGPPTGALSQTPSAEELNDPSRRPSQASSSLLSVGPSPVPGGADRKSSMVSVYGKGGRKTSVISRSTTQSSTALATPTASSRKDSSHTQRLTNTFAGSLRYLYMADNQLDDDCFDQLCMLENLRVLNLSYNDLSDMPQRSIKSWPQLVELYLSGNELASLPADDLEEYSMLQTLHINGNKFTNLPADISRAKKLTVFDCGSNSLKYNIANVPYDWNWNLNPNLRYLNLSGNRRLEIKQSSVPTAAQNREQYTDFGRLTNLRVLGLMDVTVLNSTLPDQSEDRRVRTSGSLAGYMPYGMADTLGSKNEHLSTIDLVVPRFNSNDSETLLGLFDGQALSSGGSKIAKYLQENFGHIFSQELRDLKNTENPADALRRSFLSLNKDLIAAGNTHTEDRSLMVHRGSTAPLVLSREDMNSGGVATIVYIQNQDLYVANVGDVQAMIIKSDSTHVMLTKKHDPADPNERTRIREAGGWVSRNGRLNDLLEVSRAFGYLDLMPAVQSAPNIEKHTIGEHDEMILIATREVWEYLPKDVLVDVTRSVRQDPDPMRAAQKVRDLAMAYGCSNKMTVQMLGVSNLKARRERSRQHKGQSMPVYASLQDDGGSSTGMRRARKARDGPLDSTLGRLDAEVPAPTGLIAIVFTDIKNSTQLWETYPEAMRTAIKNHNELMRRQLRTIGGFEVKTEGDAFMVSFPTATSALLWCFAVQCKLLHLDWPAELYNSVNCQPVYDRDNNLIFKGLSVRMGIHWGEPLSEPDPVTRRMDYYGPMVNKASRISACADGGQIAVSSDFIAEIQRCLEHYQEPTSTAVDLNEDSFATAIRSELRSLSGQGFEVKDMGEKKLKGLENPEFIYSLYPHALSGRIETHSKHEKEQAQDLREIRPAILSPGSELSVEPDDIWSLWRVALRLEMLCSMLEDNSKALQPPETGLLDRMRQRGGEVSEDFLVNFLDHQVSRIETCINTIYMRHLVSQSSIGSNFGALRGPMDEVLKVVAEQFQLVAEYKARYGDLRA.

Disordered regions lie at residues 1–115 (MPRN…RMSD), 127–236 (DPAG…SGAR), 266–307 (GKEH…PVPK), and 329–547 (VRDI…GPTD). Low complexity-rich tracts occupy residues 7–23 (SSRFSSMTGSSTDSARS), 35–68 (PSASSSSPFAASSNQTSNASRSASHGSRRAAPSR), and 89–107 (SPTSTSPCVSPSSITSSNS). Polar residues-rich tracts occupy residues 134–148 (SRTQQNNPSSGSLSQ) and 159–205 (PASS…TESP). Low complexity predominate over residues 217-234 (SIASITTTASSQGSRASG). Residues 269–281 (HRSHSYSHARPHR) show a composition bias toward basic residues. Over residues 343 to 357 (NDSSQQNNPPKTSGS) the composition is skewed to polar residues. Basic and acidic residues predominate over residues 377–403 (KSNEDPRSLRPTVSREDSTISVPKDRN). Residues 404–441 (GSSTMYGTRSRAQSPAPSTTGSYWGHKSGSTDGQTSPG) show a composition bias toward polar residues. Composition is skewed to basic and acidic residues over residues 454-466 (RLKEKDDAPDLKK) and 495-511 (ADGKYQPDVRDGIRPDL). The 91-residue stretch at 637–727 (HNYCIRVFRA…IEDIGREDNS (91 aa)) folds into the Ras-associating domain. LRR repeat units follow at residues 779–800 (EIISLNLSRNLSLQVPRDFISV), 803–824 (NLRDIKFNNNEARALPKSFGYA), 826–847 (RLTMLDASNNRLESLESAALHN), 850–871 (GLLKLNLANNKLKQLPREFEAF), 873–894 (VLRTLNISSNLLNNFPPFLAKL), 896–917 (NLVDLDLSFNTIQSLPDNVGQM), 919–941 (SLERLVITNNELSGSLPPSFKNL), 943–964 (SLRELDIKYNAISNIDVISQLP), 965–986 (KLEILSATRNNISQFSGTFERV), 987–1006 (RSIKLNWNPITKFEIKAPVP), 1007–1028 (TLKALNLSNAQLASIDESFHNM), 1030–1051 (NLERLELDKNYFVSLPAHIGNL), 1053–1074 (RLEYFSIAHNSVGELPPEIGCL), 1076–1097 (ELKRLDVRGNNIRKLPMELWWA), and 1099–1120 (KLDYLNASSNVLENFPKPASRA). The interval 1114 to 1226 (PKPASRAPHP…SSRKDSSHTQ (113 aa)) is disordered. Composition is skewed to low complexity over residues 1160 to 1179 (RPSQASSSLLSVGPSPVPGG) and 1201 to 1217 (SRSTTQSSTALATPTAS). 6 LRR repeats span residues 1235-1255 (SLRYLYMADNQLDDDCFDQLC), 1259-1280 (NLRVLNLSYNDLSDMPQRSIKS), 1283-1304 (QLVELYLSGNELASLPADDLEE), 1307-1328 (MLQTLHINGNKFTNLPADISRA), 1330-1352 (KLTVFDCGSNSLKYNIANVPYDW), and 1359-1380 (NLRYLNLSGNRRLEIKQSSVPT). A PPM-type phosphatase domain is found at 1432–1709 (PYGMADTLGS…NKMTVQMLGV (278 aa)). Residues 1718–1760 (RSRQHKGQSMPVYASLQDDGGSSTGMRRARKARDGPLDSTLGR) are disordered. In terms of domain architecture, Guanylate cyclase spans 1773 to 1910 (AIVFTDIKNS…PMVNKASRIS (138 aa)). Mg(2+) contacts are provided by D1778 and D1821.

It belongs to the adenylyl cyclase class-3 family. It depends on Mg(2+) as a cofactor.

It carries out the reaction ATP = 3',5'-cyclic AMP + diphosphate. Its function is as follows. Plays essential roles in regulation of cellular metabolism by catalyzing the synthesis of a second messenger, cAMP. In Podospora anserina (Pleurage anserina), this protein is Adenylate cyclase.